The chain runs to 144 residues: Ribonuclease P protein subunit RPR2 (144 aa).

The disordered stretch occupies residues 1-22 (MGKKAHGGKMKPEIDENGTLLV). Zn(2+)-binding residues include Cys-90, Cys-93, Cys-115, and Cys-117.

The protein belongs to the eukaryotic/archaeal RNase P protein component 4 family. As to quaternary structure, component of nuclear RNase P. RNase P consists of an RNA moiety and at least 9 protein subunits including POP1, POP3, POP4, POP5, POP6, POP7, POP8, RPP1 and RPR2, many of which are shared with the RNase MPR complex. Zn(2+) is required as a cofactor.

The protein resides in the nucleus. The enzyme catalyses Endonucleolytic cleavage of RNA, removing 5'-extranucleotides from tRNA precursor.. Functionally, component of ribonuclease P, a protein complex that generates mature tRNA molecules by cleaving their 5'-ends. The chain is Ribonuclease P protein subunit RPR2 (RPR2) from Saccharomyces cerevisiae (strain ATCC 204508 / S288c) (Baker's yeast).